A 512-amino-acid polypeptide reads, in one-letter code: MEDFKGYLQKGGFKQQHLLYPLLFQEYIYALAHDQGLNVNASTFNEPPEISGYDKKYSSLLVKRLINRLYQQNTFIHSVNNSKDNRFVGHNKNFYYQMISEAFAIVVEIPFSRRLVSSLKEKKEIPKYQNLRSIHSLFSFLEDKFSHLNYVSDILVPYPVHLEILVQILQCWIQDVPTLHLLRLLFQDYHNGNNRITPNKSTYGFSKDNPRLYRFLYNSYVVEYEAIFVFLRKSSSYLRSTSFGPLLERTHFYRKMKHIGVTCCNDFQKTLWLFKDALMHYVRYQGKSIMASKGNHLLMKKWKSYFVNLWQCHFHFWSQPSRIHINQFPHFSFYFLGYLSSVPINPSSAKSQMLENSFLIDTVTPKFETMISIIPMIGSLAKAKFCNLSGNPLSKPVWAELSDSDIIDRFGRIYRNLSHYYSGSSKKQTLYRIKYILRLSCARTLARKHKSTVRAFLQRLGSEFFEEFFIEEDKILSLILPTTSYSLQQLSRESVWFLDIIRINDLVNHLDL.

The protein belongs to the intron maturase 2 family. MatK subfamily.

It is found in the plastid. Its subcellular location is the chloroplast. Its function is as follows. Usually encoded in the trnK tRNA gene intron. Probably assists in splicing its own and other chloroplast group II introns. This Lemna minuta (Least duckweed) protein is Maturase K.